A 709-amino-acid polypeptide reads, in one-letter code: Polyribonucleotide nucleotidyltransferase (709 aa).

Mg(2+) is bound by residues Asp-491 and Asp-497. Residues 557–617 enclose the KH domain; that stretch reads PKSESFMIPP…ENLQKAKTFI (61 aa). Residues 641-709 enclose the S1 motif domain; sequence GERFVGKIKK…KNKVELGLVE (69 aa).

This sequence belongs to the polyribonucleotide nucleotidyltransferase family. Requires Mg(2+) as cofactor.

Its subcellular location is the cytoplasm. The enzyme catalyses RNA(n+1) + phosphate = RNA(n) + a ribonucleoside 5'-diphosphate. Functionally, involved in mRNA degradation. Catalyzes the phosphorolysis of single-stranded polyribonucleotides processively in the 3'- to 5'-direction. In Helicobacter hepaticus (strain ATCC 51449 / 3B1), this protein is Polyribonucleotide nucleotidyltransferase.